The chain runs to 876 residues: Alanine--tRNA ligase (876 aa).

Residues H565, H569, C667, and H671 each coordinate Zn(2+).

Belongs to the class-II aminoacyl-tRNA synthetase family. The cofactor is Zn(2+).

Its subcellular location is the cytoplasm. The catalysed reaction is tRNA(Ala) + L-alanine + ATP = L-alanyl-tRNA(Ala) + AMP + diphosphate. Functionally, catalyzes the attachment of alanine to tRNA(Ala) in a two-step reaction: alanine is first activated by ATP to form Ala-AMP and then transferred to the acceptor end of tRNA(Ala). Also edits incorrectly charged Ser-tRNA(Ala) and Gly-tRNA(Ala) via its editing domain. This chain is Alanine--tRNA ligase, found in Staphylococcus aureus (strain bovine RF122 / ET3-1).